Reading from the N-terminus, the 142-residue chain is Mitochondrial import receptor subunit TOM22 homolog (142 aa).

Low complexity predominate over residues 1–11 (MAAAVAAAGAG). The tract at residues 1 to 42 (MAAAVAAAGAGEPQSPDELLPKGDAEKPEEELEEDDDEELDE) is disordered. Ala-2 is modified (N-acetylalanine). Over 2–83 (AAAVAAAGAG…AQKMYRFSRA (82 aa)) the chain is Cytoplasmic. At Ser-15 the chain carries Phosphoserine. Residues 27 to 42 (KPEEELEEDDDEELDE) are compositionally biased toward acidic residues. The import sequence; necessary for mitochondrion outer membrane localization and integration in the TOM complex stretch occupies residues 41-50 (DETLSERLWG). At Thr-43 the chain carries Phosphothreonine. A Phosphoserine modification is found at Ser-45. Residues 83-103 (AALWIGTTSFMILVLPVVFET) are TMD; necessary for mitochondrion outer membrane localization and integration in the TOM complex. The chain crosses the membrane as a helical span at residues 84–103 (ALWIGTTSFMILVLPVVFET). The Mitochondrial intermembrane segment spans residues 104 to 142 (EKLQMEQQQQLQQRQILLGPNTGLSGGMPGALPSLPGKI). Residues 123-142 (PNTGLSGGMPGALPSLPGKI) form a C-tail signal; necessary for mitochondrion outer membrane localization and integration in the TOM complex region.

Belongs to the Tom22 family. Forms part of the preprotein translocase complex of the outer mitochondrial membrane (TOM complex) which consists of at least 7 different proteins (TOMM5, TOMM6, TOMM7, TOMM20, TOMM22, TOMM40 and TOMM70). Interacts with TOMM40. Interacts with PPP2R2B. As to expression, ubiquitous.

It localises to the mitochondrion outer membrane. In terms of biological role, central receptor component of the translocase of the outer membrane of mitochondria (TOM complex) responsible for the recognition and translocation of cytosolically synthesized mitochondrial preproteins. Together with the peripheral receptor TOM20 functions as the transit peptide receptor and facilitates the movement of preproteins into the translocation pore. Required for the translocation across the mitochondrial outer membrane of cytochrome P450 monooxygenases. The polypeptide is Mitochondrial import receptor subunit TOM22 homolog (TOMM22) (Homo sapiens (Human)).